Here is a 978-residue protein sequence, read N- to C-terminus: Serine/threonine-protein kinase PLK4 (978 aa).

In terms of domain architecture, Protein kinase spans 13–266; that stretch reads FQVLDLLGKG…LSGILDHPFI (254 aa). ATP is bound by residues 19-27 and lysine 42; that span reads LGKGGFACV. Catalysis depends on aspartate 137, which acts as the Proton acceptor. Composition is skewed to polar residues over residues 271 to 282 and 291 to 304; these read LNTKYSSPTRQH and SLDS…TIST. Disordered stretches follow at residues 271 to 381, 489 to 578, 788 to 818, and 838 to 869; these read LNTK…TRTS, IEQP…AERL, AWKN…SSPS, and AQTT…QPIP. The segment covering 324–335 has biased composition (basic and acidic residues); sequence RTSDIWPRDPKH. 2 stretches are compositionally biased toward polar residues: residues 351 to 362 and 371 to 381; these read TENVTTGSSSHV and AQYSGLKTRTS. 2 stretches are compositionally biased toward basic and acidic residues: residues 518 to 527 and 536 to 566; these read GSDSVSKDFD and ESRR…DKSL. The 114-residue stretch at 565–678 folds into the Cryptic POLO box 1 (CPB1) domain; the sequence is SLGELTEPLN…AKFVQLVRKL (114 aa). One can recognise a Cryptic POLO box 2 (CPB2) domain in the interval 679–792; the sequence is TPKVTLYSKH…GRRPPAWKNS (114 aa). Polar residues predominate over residues 801 to 818; it reads QQGCSNGQSQPVLPSSPS. A compositionally biased stretch (basic residues) spans 848-862; the sequence is KSRKTSPSKTSRHKQ. One can recognise a POLO box domain in the interval 895–973; the sequence is HVCKMAFVDG…LPAVIKTLAT (79 aa).

The protein belongs to the protein kinase superfamily. Ser/Thr protein kinase family. CDC5/Polo subfamily. In terms of assembly, homodimer. Post-translationally, ubiquitinated; leading to its degradation by the proteasome.

The protein resides in the cytoplasm. It is found in the cytoskeleton. The protein localises to the microtubule organizing center. It localises to the centrosome. Its subcellular location is the centriole. The catalysed reaction is L-seryl-[protein] + ATP = O-phospho-L-seryl-[protein] + ADP + H(+). It carries out the reaction L-threonyl-[protein] + ATP = O-phospho-L-threonyl-[protein] + ADP + H(+). Functionally, serine/threonine-protein kinase that plays a central role in centriole duplication. Able to trigger procentriole formation on the surface of the mother centriole cylinder, leading to the recruitment of centriole biogenesis proteins. When overexpressed, it is able to induce centrosome amplification through the simultaneous generation of multiple procentrioles adjoining each parental centriole during S phase. This Nematostella vectensis (Starlet sea anemone) protein is Serine/threonine-protein kinase PLK4.